We begin with the raw amino-acid sequence, 1060 residues long: DNA-directed RNA polymerase subunit beta (1060 aa).

It belongs to the RNA polymerase beta chain family. As to quaternary structure, in plastids the minimal PEP RNA polymerase catalytic core is composed of four subunits: alpha, beta, beta', and beta''. When a (nuclear-encoded) sigma factor is associated with the core the holoenzyme is formed, which can initiate transcription.

It localises to the plastid. The protein resides in the chloroplast. It carries out the reaction RNA(n) + a ribonucleoside 5'-triphosphate = RNA(n+1) + diphosphate. Functionally, DNA-dependent RNA polymerase catalyzes the transcription of DNA into RNA using the four ribonucleoside triphosphates as substrates. The polypeptide is DNA-directed RNA polymerase subunit beta (Lactuca sativa (Garden lettuce)).